A 681-amino-acid polypeptide reads, in one-letter code: MFRKKKKKRPEISAPQNFQHRVHTSFDPKEGKFVGLPPQWQNILDTLRRPKPVVDPSRITRVQLQPMKTVVRGSAMPVDGYISGLLNDIQKLSVISSNTLRGRSPTSRRRAQSLGLLGDEHWATDPDMYLQSPQSERTDPHGLYLSCNGGTPAGHKQMPWPEPQSPRVLPNGLAAKAQSLGPAEFQGASQRCLQLGACLQSSPPGASPPTGTNRHGMKAAKHGSEEARPQSCLVGSATGRPGGEGSPSPKTRESSLKRRLFRSMFLSTAATAPPSSSKPGPPPQSKPNSSFRPPQKDNPPSLVAKAQSLPSDQPVGTFSPLTTSDTSSPQKSLRTAPATGQLPGRSSPAGSPRTWHAQISTSNLYLPQDPTVAKGALAGEDTGVVTHEQFKAALRMVVDQGDPRLLLDSYVKIGEGSTGIVCLAREKHSGRQVAVKMMDLRKQQRRELLFNEVVIMRDYQHFNVVEMYKSYLVGEELWVLMEFLQGGALTDIVSQVRLNEEQIATVCEAVLQALAYLHAQGVIHRDIKSDSILLTLDGRVKLSDFGFCAQISKDVPKRKSLVGTPYWMAPEVISRSLYATEVDIWSLGIMVIEMVDGEPPYFSDSPVQAMKRLRDSPPPKLKNSHKVSPVLRDFLERMLVRDPQERATAQELLDHPFLLQTGLPECLVPLIQLYRKQTSTC.

4 disordered regions span residues 1–30 (MFRKKKKKRPEISAPQNFQHRVHTSFDPKE), 149–169 (GGTPAGHKQMPWPEPQSPRVL), 200–256 (QSSP…ESSL), and 268–355 (TAAT…PRTW). One can recognise a CRIB domain in the interval 12–25 (ISAPQNFQHRVHTS). A linker region spans residues 26-406 (FDPKEGKFVG…VVDQGDPRLL (381 aa)). Low complexity-rich tracts occupy residues 201–212 (SSPPGASPPTGT) and 268–278 (TAATAPPSSSK). Over residues 308 to 333 (SLPSDQPVGTFSPLTTSDTSSPQKSL) the composition is skewed to polar residues. Positions 407 to 658 (LDSYVKIGEG…AQELLDHPFL (252 aa)) constitute a Protein kinase domain. Residues 413–421 (IGEGSTGIV) and lysine 436 each bind ATP. The Proton acceptor role is filled by aspartate 526. Serine 560 carries the post-translational modification Phosphoserine; by autocatalysis.

Belongs to the protein kinase superfamily. STE Ser/Thr protein kinase family. STE20 subfamily. Interacts tightly with GTP-bound but not GDP-bound CDC42/p21 and RAC1. Interacts with the androgen receptor AR and the estrogen receptor ESR1. Interacts with IQGAP1 and PPM1B. Autophosphorylated. Phosphorylated by MAP2K6//MAPKK6, leading to PAK6 activation. In terms of tissue distribution, selectively expressed in brain and testis, with lower levels in multiple tissues including prostate and breast.

It localises to the cytoplasm. It is found in the nucleus. It catalyses the reaction L-seryl-[protein] + ATP = O-phospho-L-seryl-[protein] + ADP + H(+). It carries out the reaction L-threonyl-[protein] + ATP = O-phospho-L-threonyl-[protein] + ADP + H(+). Functionally, serine/threonine protein kinase that plays a role in the regulation of gene transcription. The kinase activity is induced by various effectors including AR or MAP2K6/MAPKK6. Phosphorylates the DNA-binding domain of androgen receptor/AR and thereby inhibits AR-mediated transcription. Also inhibits ESR1-mediated transcription. May play a role in cytoskeleton regulation by interacting with IQGAP1. May protect cells from apoptosis through phosphorylation of BAD. This is Serine/threonine-protein kinase PAK 6 (PAK6) from Homo sapiens (Human).